Here is a 309-residue protein sequence, read N- to C-terminus: Taste receptor type 2 member 46 (309 aa).

Met-1 is a topological domain (extracellular). The chain crosses the membrane as a helical span at residues 2-22 (ITFLPIIFSILIVVTFVIGNF). The Cytoplasmic segment spans residues 23-46 (ANGFIALANSIEWFKRQKISFADQ). A helical transmembrane segment spans residues 47-67 (ILTALAVSRVGLLWVLLLNWY). At 68–86 (ATELNPAFYSIEVRITAYN) the chain is on the extracellular side. The helical transmembrane segment at 87 to 107 (LWAVINHFSNWLATSLSIFYL) threads the bilayer. The Cytoplasmic segment spans residues 108–126 (LKIANFSNLIFLRLKRRVK). Residues 127–147 (SVVLVILLGPLLFLVCHLFVI) form a helical membrane-spanning segment. Over 148–178 (NMNQIIWTKEYEGNMTWKIKLRSAMYLSNIT) the chain is Extracellular. Asn-161 and Asn-176 each carry an N-linked (GlcNAc...) asparagine glycan. Residues 179–199 (VTILANLVPFTLTLISFLLLI) form a helical membrane-spanning segment. Residues 200-229 (CSLCKHLKKMQLHGKGSQDPSMKVHIKALQ) are Cytoplasmic-facing. The chain crosses the membrane as a helical span at residues 230–250 (TVTSFLLLCAIYFLSIIMSVW). At 251–259 (SFESLENKP) the chain is on the extracellular side. A helical transmembrane segment spans residues 260-280 (VFMFCEAITFSYPSTHPFILI). At 281-309 (WGNKKLKQTFLSVLWHVRYWVKGEEPSSP) the chain is on the cytoplasmic side.

It belongs to the G-protein coupled receptor T2R family.

It is found in the membrane. It localises to the cell projection. The protein resides in the cilium membrane. In terms of biological role, receptor that may play a role in the perception of bitterness and is gustducin-linked. May play a role in sensing the chemical composition of the gastrointestinal content. The activity of this receptor may stimulate alpha gustducin, mediate PLC-beta-2 activation and lead to the gating of TRPM5. In airway epithelial cells, binding of bitter compounds increases the intracellular calcium ion concentration and stimulates ciliary beat frequency. This Pan paniscus (Pygmy chimpanzee) protein is Taste receptor type 2 member 46 (TAS2R46).